The following is a 571-amino-acid chain: Serine/threonine-protein kinase Nek7 (571 aa).

Positions 19–277 (YHVVEQVRRG…LRNPSLQPYL (259 aa)) constitute a Protein kinase domain. ATP is bound by residues 25–33 (VRRGKSSSD) and Lys48. Asp144 serves as the catalytic Proton acceptor. Disordered regions lie at residues 298–321 (SPKDKARRNSLPGKFGKERVSREK) and 338–363 (TETGSSSSSQPASSTNGAEDKLETKR). Positions 312–321 (FGKERVSREK) are enriched in basic and acidic residues. Over residues 342-351 (SSSSSQPASS) the composition is skewed to low complexity.

This sequence belongs to the protein kinase superfamily. NEK Ser/Thr protein kinase family. NIMA subfamily.

The catalysed reaction is L-seryl-[protein] + ATP = O-phospho-L-seryl-[protein] + ADP + H(+). It catalyses the reaction L-threonyl-[protein] + ATP = O-phospho-L-threonyl-[protein] + ADP + H(+). Functionally, may be involved in plant development processes. The protein is Serine/threonine-protein kinase Nek7 (NEK7) of Arabidopsis thaliana (Mouse-ear cress).